Reading from the N-terminus, the 388-residue chain is Glucose-6-phosphate/phosphate translocator 2, chloroplastic (388 aa).

Residues 1-68 (MLSSIKPSSS…SASNFKREVK (68 aa)) constitute a chloroplast transit peptide. 8 helical membrane-spanning segments follow: residues 95-115 (LKIG…NIYN), 122-142 (FPYP…MMLV), 158-178 (FWKT…AATV), 211-231 (FPLP…LAAI), 233-253 (ELNF…AFVF), 281-301 (LVIL…AAGW), 305-325 (VSQV…FYHL), and 358-378 (IIIF…IAIF). Residues 113–231 (IYNKKVLNAF…IIGGCALAAI (119 aa)) enclose the EamA domain.

This sequence belongs to the TPT transporter family. GPT (TC 2.A.7.9) subfamily. In terms of tissue distribution, expressed in seeds, flowers, stamens, and rosette leaves, with highest levels found in sepals and senescing leaves.

Its subcellular location is the plastid. The protein localises to the chloroplast membrane. Glucose 6-phosphate (Glc6P) transporter. Also transports inorganic phosphate, 3-phosphoglycerate, triose phosphates and, to a leser extent, phosphoenolpyruvate. Responsible for the transport of Glc6P into plastids of heterotrophic tissues where it can be used as a carbon source for starch biosynthesis, as substrate for fatty acid biosynthesis or as substrate for NADPH generation via the oxidative pentose phosphate pathway (OPPP). Required for dynamic acclimation of photosynthesis and partitioning of Glc6P between the chloroplast and the cytosol. May modulate the sensing of sugar status during early seedling development. The chain is Glucose-6-phosphate/phosphate translocator 2, chloroplastic from Arabidopsis thaliana (Mouse-ear cress).